A 685-amino-acid chain; its full sequence is Bifunctional diguanylate cyclase/cyclic di-GMP phosphodiesterase MucR (685 aa).

The MHYT domain maps to 6–199; it reads YNQVLVAFSL…YTGMAAAQFP (194 aa). Transmembrane regions (helical) follow at residues 9 to 29, 44 to 64, 77 to 97, 117 to 137, 141 to 161, 175 to 195, and 214 to 234; these read VLVAFSLIVAILASYTALDMA, LIGGAFAMGFGIWSMHFVGML, GLTLLSLLLAVGSSAFALWLV, GIAAMHYTGMAALLMMPGIVY, WLGLSILIAVIASGAALWIAF, AGAALVMGCAIVGMHYTGMAA, and GWLAVLVIVITLAVIAIALIV. The Cytoplasmic portion of the chain corresponds to 235–685; that stretch reads SVLDSRLEAR…PAEQLLASVA (451 aa). The GGDEF domain occupies 293–425; sequence RRFAVLFMDL…GRNGYCFFES (133 aa). Residues 434–685 form the EAL domain; sequence QLQLLHDLRQ…PAEQLLASVA (252 aa). Positions 455, 469, 472, 473, 528, and 533 each coordinate 3',3'-c-di-GMP. Glutamate 469 contacts Mg(2+). A Mg(2+)-binding site is contributed by asparagine 528. Residues glutamate 560, aspartate 590, and aspartate 591 each coordinate Mg(2+). Aspartate 590 contributes to the 3',3'-c-di-GMP binding site. Arginine 614 is a binding site for 3',3'-c-di-GMP. Glutamate 647 provides a ligand contact to Mg(2+). 3',3'-c-di-GMP is bound by residues glutamate 650 and phenylalanine 669.

As to quaternary structure, homodimer. Mg(2+) serves as cofactor.

It is found in the cell inner membrane. It carries out the reaction 2 GTP = 3',3'-c-di-GMP + 2 diphosphate. The enzyme catalyses 3',3'-c-di-GMP + H2O = 5'-phosphoguanylyl(3'-&gt;5')guanosine + H(+). In terms of biological role, displays both diguanylate cyclase (DGC) and c-di-GMP-specific phosphodiesterase (PDE) activity. Probably modulates DGC and PDE activities, and thus c-di-GMP levels, in a growth mode-dependent manner. May act as a PDE under planktonic growth conditions and as a DGC in biofilms. During biofilm formation, it specifically activates alginate biosynthesis via generation of a localized c-di-GMP pool in the vicinity of the alginate biosynthesis protein Alg44. This chain is Bifunctional diguanylate cyclase/cyclic di-GMP phosphodiesterase MucR, found in Pseudomonas aeruginosa (strain ATCC 15692 / DSM 22644 / CIP 104116 / JCM 14847 / LMG 12228 / 1C / PRS 101 / PAO1).